Reading from the N-terminus, the 437-residue chain is Integrase (437 aa).

The Core-binding (CB) domain occupies 73-158 (WTVERWLTHW…TARTAFGEAY (86 aa)). The Tyr recombinase domain maps to 179-428 (EEVEPLEVED…DSVRNDVADR (250 aa)). Residues Arg214, Lys245, His379, Arg382, and Trp405 contribute to the active site. The active-site O-(3'-phospho-DNA)-tyrosine intermediate is Tyr414.

The protein belongs to the 'phage' integrase family.

In terms of biological role, is a recombinase (or integrase), catalyzing the cutting and rejoining of the recombining DNA molecules. This Saccharopolyspora erythraea (Streptomyces erythraeus) protein is Integrase (int).